Consider the following 915-residue polypeptide: Hexokinase HKDC1 (915 aa).

Residues 1–20 form a mitochondrial-binding peptide (MBP) region; that stretch reads MFAVHLVAFYFTKLKEDQIK. Hexokinase domains follow at residues 16–458 and 464–903; these read EDQI…MVTA and QAQR…LITA. ATP is bound by residues arginine 30 and 84-89; that span reads DLGGSK. The segment at 73-207 is hexokinase small subdomain 1; the sequence is DGSENGEFLS…DLDVDILALV (135 aa). A D-glucose 6-phosphate-binding site is contributed by 84–91; sequence DLGGSKFR. Residues serine 155, 172 to 173, and 208 to 209 contribute to the D-glucose site; these read TK and ND. Positions 208 to 447 are hexokinase large subdomain 1; it reads NDTVGTMMTC…CDVRFLLSES (240 aa). D-glucose 6-phosphate is bound by residues aspartate 209 and threonine 232. D-glucose-binding positions include asparagine 235, glutamate 260, and 291-294; that span reads QLFE. 413-415 contributes to the D-glucose 6-phosphate binding site; it reads DGT. 425-426 provides a ligand contact to ATP; it reads KR. D-glucose 6-phosphate contacts are provided by residues serine 449 and 532–536; that span reads DLGGT. The segment at 521–652 is hexokinase small subdomain 2; sequence DGTEKGKFLA…EFDLDIVAIV (132 aa). 532 to 537 contacts ATP; the sequence is DLGGTN. Residues 600–601, 617–618, and 653–654 contribute to the D-glucose site; these read SF, TK, and ND. The hexokinase large subdomain 2 stretch occupies residues 653–892; the sequence is NDTVGTMMTC…CDVTFMLSED (240 aa). Residues aspartate 654 and threonine 677 each coordinate D-glucose 6-phosphate. Position 677 (threonine 677) interacts with ATP. Residues 679 to 680, glutamate 705, and glutamate 739 contribute to the D-glucose site; that span reads SN. ATP contacts are provided by residues 744-745, 781-785, and 860-864; these read GM, TKFLS, and TLYKL. D-glucose 6-phosphate-binding positions include 858 to 860 and serine 894; that span reads DGT.

The protein belongs to the hexokinase family. Widely expressed. Detected in retina, brain, cerebellum, liver, lung, kidney, spleen, pancreas and intestine.

The protein resides in the cytoplasm. It localises to the mitochondrion membrane. Its subcellular location is the photoreceptor inner segment. The catalysed reaction is a D-hexose + ATP = a D-hexose 6-phosphate + ADP + H(+). The enzyme catalyses D-glucose + ATP = D-glucose 6-phosphate + ADP + H(+). It functions in the pathway carbohydrate metabolism; hexose metabolism. Its pathway is carbohydrate degradation; glycolysis; D-glyceraldehyde 3-phosphate and glycerone phosphate from D-glucose: step 1/4. Its function is as follows. Catalyzes the phosphorylation of hexose to hexose 6-phosphate, although at very low level compared to other hexokinases. Has low glucose phosphorylating activity compared to other hexokinases. Involved in glucose homeostasis and hepatic lipid accumulation. Required to maintain whole-body glucose homeostasis during pregnancy; however additional evidences are required to confirm this role. The chain is Hexokinase HKDC1 from Mus musculus (Mouse).